Here is an 807-residue protein sequence, read N- to C-terminus: 1-phosphatidylinositol 4,5-bisphosphate phosphodiesterase delta-4 (807 aa).

The PH domain maps to 16–124 (LLMQEGTMMR…WMRGLQLLVD (109 aa)). Residues 26 to 53 (KVRTKSWKKLRYFRLQNDGMTVWHGSQP) are substrate binding. EF-hand domains lie at 134 to 169 (QMDQ…MNVE), 170 to 205 (MDEE…LTKR), and 203 to 237 (TKRT…EQKE). Ca(2+)-binding residues include D147, N149, D151, R153, E158, D183, S187, D189, and E194. A GBA motif is present at residues 213-243 (EDFSSDKQKLTLLEFVDFLRKEQKEKDHAPD). The PI-PLC X-box domain maps to 290–435 (QDMTQPLSHY…LRGKILVKGK (146 aa)). Residue H305 is part of the active site. N306, E335, and D337 together coordinate Ca(2+). The active site involves H350. E384 is a Ca(2+) binding site. 2 residues coordinate substrate: K433 and K435. The interval 442-490 (VDKEEEEEEEEEELEKDEGPDLDPASPELDTQPQPETQGQAAGNKKERK) is disordered. Residues 443-462 (DKEEEEEEEEEELEKDEGPD) show a composition bias toward acidic residues. Positions 470–482 (LDTQPQPETQGQA) are enriched in polar residues. Residues 538 to 654 (LSALVVYLRT…GYVLKPEFLR (117 aa)) enclose the PI-PLC Y-box domain. Substrate contacts are provided by S567 and R594. In terms of domain architecture, C2 spans 654–781 (RDTQSSFNPE…QGYRHVSLLS (128 aa)). Positions 697, 721, 750, and 751 each coordinate Ca(2+). A PDZ-binding motif is present at residues 776 to 779 (HVSL).

Interacts with GRIP1. Interacts (via GBA motif) with guanine nucleotide-binding protein G(i) alpha subunit GNAI3 (inactive GDP-bound form)l low-affinity interaction. Requires Ca(2+) as cofactor.

It is found in the membrane. The protein resides in the nucleus. Its subcellular location is the cytoplasm. The protein localises to the endoplasmic reticulum. The catalysed reaction is a 1,2-diacyl-sn-glycero-3-phospho-(1D-myo-inositol-4,5-bisphosphate) + H2O = 1D-myo-inositol 1,4,5-trisphosphate + a 1,2-diacyl-sn-glycerol + H(+). It catalyses the reaction a 1,2-diacyl-sn-glycero-3-phospho-(1D-myo-inositol) + H2O = 1D-myo-inositol 1-phosphate + a 1,2-diacyl-sn-glycerol + H(+). Functionally, hydrolyzes the phosphatidylinositol 4,5-bisphosphate (PIP2) to generate 2 second messenger molecules diacylglycerol (DAG) and inositol 1,4,5-trisphosphate (IP3). DAG mediates the activation of protein kinase C (PKC), while IP3 releases Ca(2+) from intracellular stores. Required for acrosome reaction in sperm during fertilization, probably by acting as an important enzyme for intracellular Ca(2+) mobilization in the zona pellucida-induced acrosome reaction. May play a role in cell growth. Modulates the liver regeneration in cooperation with nuclear PKC. Overexpression up-regulates the Erk signaling pathway and proliferation. The polypeptide is 1-phosphatidylinositol 4,5-bisphosphate phosphodiesterase delta-4 (Mus musculus (Mouse)).